A 561-amino-acid polypeptide reads, in one-letter code: DNA ligase B (561 aa).

The active-site N6-AMP-lysine intermediate is Lys125.

It belongs to the NAD-dependent DNA ligase family. LigB subfamily.

It carries out the reaction NAD(+) + (deoxyribonucleotide)n-3'-hydroxyl + 5'-phospho-(deoxyribonucleotide)m = (deoxyribonucleotide)n+m + AMP + beta-nicotinamide D-nucleotide.. In terms of biological role, catalyzes the formation of phosphodiester linkages between 5'-phosphoryl and 3'-hydroxyl groups in double-stranded DNA using NAD as a coenzyme and as the energy source for the reaction. The sequence is that of DNA ligase B from Escherichia coli O127:H6 (strain E2348/69 / EPEC).